A 182-amino-acid polypeptide reads, in one-letter code: NADH-quinone oxidoreductase subunit I (182 aa).

2 consecutive 4Fe-4S ferredoxin-type domains span residues 52–82 (LTRDPDGEERCVACNLCAVACPVGCISLQKA) and 92–121 (DFFRINFSRCIFCGLCEEACPTTAIQLTPD). [4Fe-4S] cluster contacts are provided by Cys62, Cys65, Cys68, Cys72, Cys101, Cys104, Cys107, and Cys111.

This sequence belongs to the complex I 23 kDa subunit family. As to quaternary structure, NDH-1 is composed of 13 different subunits. Subunits NuoA, H, J, K, L, M, N constitute the membrane sector of the complex. Requires [4Fe-4S] cluster as cofactor.

It is found in the cell inner membrane. It catalyses the reaction a quinone + NADH + 5 H(+)(in) = a quinol + NAD(+) + 4 H(+)(out). NDH-1 shuttles electrons from NADH, via FMN and iron-sulfur (Fe-S) centers, to quinones in the respiratory chain. The immediate electron acceptor for the enzyme in this species is believed to be ubiquinone. Couples the redox reaction to proton translocation (for every two electrons transferred, four hydrogen ions are translocated across the cytoplasmic membrane), and thus conserves the redox energy in a proton gradient. This chain is NADH-quinone oxidoreductase subunit I, found in Pseudomonas savastanoi pv. phaseolicola (strain 1448A / Race 6) (Pseudomonas syringae pv. phaseolicola (strain 1448A / Race 6)).